The chain runs to 248 residues: Probable transcriptional regulatory protein Syncc9902_0542 (248 aa).

Belongs to the TACO1 family.

It localises to the cytoplasm. This Synechococcus sp. (strain CC9902) protein is Probable transcriptional regulatory protein Syncc9902_0542.